The sequence spans 368 residues: tRNA(Met) cytidine acetate ligase (368 aa).

ATP is bound by residues Ile7–Leu20, Gly96, Asn152, and Arg175.

It belongs to the TmcAL family.

The protein resides in the cytoplasm. It catalyses the reaction cytidine(34) in elongator tRNA(Met) + acetate + ATP = N(4)-acetylcytidine(34) in elongator tRNA(Met) + AMP + diphosphate. Functionally, catalyzes the formation of N(4)-acetylcytidine (ac(4)C) at the wobble position of elongator tRNA(Met), using acetate and ATP as substrates. First activates an acetate ion to form acetyladenylate (Ac-AMP) and then transfers the acetyl group to tRNA to form ac(4)C34. The sequence is that of tRNA(Met) cytidine acetate ligase from Streptococcus pyogenes serotype M1.